A 312-amino-acid polypeptide reads, in one-letter code: Ribosomal protein L11 methyltransferase (312 aa).

S-adenosyl-L-methionine is bound by residues T160, G181, D203, and N246.

Belongs to the methyltransferase superfamily. PrmA family.

Its subcellular location is the cytoplasm. The enzyme catalyses L-lysyl-[protein] + 3 S-adenosyl-L-methionine = N(6),N(6),N(6)-trimethyl-L-lysyl-[protein] + 3 S-adenosyl-L-homocysteine + 3 H(+). In terms of biological role, methylates ribosomal protein L11. This Staphylococcus haemolyticus (strain JCSC1435) protein is Ribosomal protein L11 methyltransferase.